Consider the following 472-residue polypeptide: 3-isopropylmalate dehydratase large subunit (472 aa).

[4Fe-4S] cluster contacts are provided by Cys347, Cys407, and Cys410.

This sequence belongs to the aconitase/IPM isomerase family. LeuC type 1 subfamily. Heterodimer of LeuC and LeuD. It depends on [4Fe-4S] cluster as a cofactor.

It carries out the reaction (2R,3S)-3-isopropylmalate = (2S)-2-isopropylmalate. It functions in the pathway amino-acid biosynthesis; L-leucine biosynthesis; L-leucine from 3-methyl-2-oxobutanoate: step 2/4. Functionally, catalyzes the isomerization between 2-isopropylmalate and 3-isopropylmalate, via the formation of 2-isopropylmaleate. The polypeptide is 3-isopropylmalate dehydratase large subunit (Parasynechococcus marenigrum (strain WH8102)).